We begin with the raw amino-acid sequence, 359 residues long: Serpentine receptor class epsilon-26 (359 aa).

The next 7 membrane-spanning stretches (helical) occupy residues cysteine 29 to serine 49, isoleucine 66 to leucine 86, valine 127 to valine 147, phenylalanine 172 to leucine 192, tyrosine 195 to isoleucine 215, leucine 256 to leucine 276, and phenylalanine 282 to valine 302.

It belongs to the nematode receptor-like protein sre family.

It is found in the membrane. The chain is Serpentine receptor class epsilon-26 (sre-26) from Caenorhabditis elegans.